Here is a 345-residue protein sequence, read N- to C-terminus: NADH-ubiquinone oxidoreductase chain 2 (345 aa).

Helical transmembrane passes span 25–45 (HWLL…PLMT), 60–80 (FLTQ…NAWL), 99–119 (TIAI…PEVL), 149–171 (LNTP…GGLN), 178–198 (ILAF…PFSP), 199–219 (QLMI…FLVL), 242–262 (ALSL…GFVP), 282–302 (LALS…IVTL), and 324–344 (LLLS…PLTL).

It belongs to the complex I subunit 2 family. In terms of assembly, core subunit of respiratory chain NADH dehydrogenase (Complex I) which is composed of 45 different subunits.

Its subcellular location is the mitochondrion inner membrane. It catalyses the reaction a ubiquinone + NADH + 5 H(+)(in) = a ubiquinol + NAD(+) + 4 H(+)(out). Its function is as follows. Core subunit of the mitochondrial membrane respiratory chain NADH dehydrogenase (Complex I) which catalyzes electron transfer from NADH through the respiratory chain, using ubiquinone as an electron acceptor. Essential for the catalytic activity and assembly of complex I. The polypeptide is NADH-ubiquinone oxidoreductase chain 2 (mt-nd2) (Xenopus laevis (African clawed frog)).